Here is a 184-residue protein sequence, read N- to C-terminus: ATP synthase subunit b, chloroplastic (184 aa).

The helical transmembrane segment at 27 to 49 threads the bilayer; sequence LATNPINLSVVLGVLIFFGKGVL.

It belongs to the ATPase B chain family. As to quaternary structure, F-type ATPases have 2 components, F(1) - the catalytic core - and F(0) - the membrane proton channel. F(1) has five subunits: alpha(3), beta(3), gamma(1), delta(1), epsilon(1). F(0) has four main subunits: a(1), b(1), b'(1) and c(10-14). The alpha and beta chains form an alternating ring which encloses part of the gamma chain. F(1) is attached to F(0) by a central stalk formed by the gamma and epsilon chains, while a peripheral stalk is formed by the delta, b and b' chains.

Its subcellular location is the plastid. The protein localises to the chloroplast thylakoid membrane. In terms of biological role, f(1)F(0) ATP synthase produces ATP from ADP in the presence of a proton or sodium gradient. F-type ATPases consist of two structural domains, F(1) containing the extramembraneous catalytic core and F(0) containing the membrane proton channel, linked together by a central stalk and a peripheral stalk. During catalysis, ATP synthesis in the catalytic domain of F(1) is coupled via a rotary mechanism of the central stalk subunits to proton translocation. Its function is as follows. Component of the F(0) channel, it forms part of the peripheral stalk, linking F(1) to F(0). The sequence is that of ATP synthase subunit b, chloroplastic from Piper cenocladum (Ant piper).